A 499-amino-acid polypeptide reads, in one-letter code: Glutamate--tRNA ligase (499 aa).

A 'HIGH' region motif is present at residues 10–20 (PSPTGTPHVGM). A 'KMSKS' region motif is present at residues 255–259 (KLSKR). Lys258 is an ATP binding site.

Belongs to the class-I aminoacyl-tRNA synthetase family. Glutamate--tRNA ligase type 1 subfamily. Monomer.

The protein resides in the cytoplasm. It catalyses the reaction tRNA(Glu) + L-glutamate + ATP = L-glutamyl-tRNA(Glu) + AMP + diphosphate. Its function is as follows. Catalyzes the attachment of glutamate to tRNA(Glu) in a two-step reaction: glutamate is first activated by ATP to form Glu-AMP and then transferred to the acceptor end of tRNA(Glu). The sequence is that of Glutamate--tRNA ligase from Corynebacterium urealyticum (strain ATCC 43042 / DSM 7109).